The sequence spans 128 residues: Sulfurtransferase TusD (128 aa).

Cys78 (cysteine persulfide intermediate) is an active-site residue.

It belongs to the DsrE/TusD family. Heterohexamer, formed by a dimer of trimers. The hexameric TusBCD complex contains 2 copies each of TusB, TusC and TusD. The TusBCD complex interacts with TusE.

Its subcellular location is the cytoplasm. Its function is as follows. Part of a sulfur-relay system required for 2-thiolation of 5-methylaminomethyl-2-thiouridine (mnm(5)s(2)U) at tRNA wobble positions. Accepts sulfur from TusA and transfers it in turn to TusE. This is Sulfurtransferase TusD from Salmonella typhi.